The following is a 122-amino-acid chain: Large ribosomal subunit protein uL14 (122 aa).

This sequence belongs to the universal ribosomal protein uL14 family. Part of the 50S ribosomal subunit. Forms a cluster with proteins L3 and L19. In the 70S ribosome, L14 and L19 interact and together make contacts with the 16S rRNA in bridges B5 and B8.

In terms of biological role, binds to 23S rRNA. Forms part of two intersubunit bridges in the 70S ribosome. The polypeptide is Large ribosomal subunit protein uL14 (Mycolicibacterium smegmatis (strain ATCC 700084 / mc(2)155) (Mycobacterium smegmatis)).